The following is a 320-amino-acid chain: tRNA-cytidine(32) 2-sulfurtransferase (320 aa).

A PP-loop motif motif is present at residues 54–59; that stretch reads SGGKDS. Cys-129, Cys-132, and Cys-220 together coordinate [4Fe-4S] cluster.

This sequence belongs to the TtcA family. Homodimer. Requires Mg(2+) as cofactor. The cofactor is [4Fe-4S] cluster.

Its subcellular location is the cytoplasm. It carries out the reaction cytidine(32) in tRNA + S-sulfanyl-L-cysteinyl-[cysteine desulfurase] + AH2 + ATP = 2-thiocytidine(32) in tRNA + L-cysteinyl-[cysteine desulfurase] + A + AMP + diphosphate + H(+). It functions in the pathway tRNA modification. Catalyzes the ATP-dependent 2-thiolation of cytidine in position 32 of tRNA, to form 2-thiocytidine (s(2)C32). The sulfur atoms are provided by the cysteine/cysteine desulfurase (IscS) system. The sequence is that of tRNA-cytidine(32) 2-sulfurtransferase from Bordetella bronchiseptica (strain ATCC BAA-588 / NCTC 13252 / RB50) (Alcaligenes bronchisepticus).